A 122-amino-acid polypeptide reads, in one-letter code: MGTHLHITAWVLGIILFFVAFALAGKNDKGAKIVHMIVRLLYLIIIATGVELYVRTGMKIPGFGGEYIGKMILGILVIGFMEMTLVRKKKGKSVTGVLIGFIIFAIVTILLGLRLPIGFHIF.

The next 4 helical transmembrane spans lie at 5-25, 33-53, 60-80, and 93-113; these read LHIT…ALAG, IVHM…VELY, IPGF…VIGF, and SVTG…LLGL.

Belongs to the UPF0344 family.

The protein localises to the cell membrane. The polypeptide is UPF0344 protein BPUM_1008 (Bacillus pumilus (strain SAFR-032)).